Consider the following 242-residue polypeptide: UPF0309 protein BH3325 (242 aa).

The region spanning 34 to 217 is the SIS domain; sequence VSEAVMNGGR…HLLVQQGFEP (184 aa).

Belongs to the UPF0309 family.

This is UPF0309 protein BH3325 from Halalkalibacterium halodurans (strain ATCC BAA-125 / DSM 18197 / FERM 7344 / JCM 9153 / C-125) (Bacillus halodurans).